Here is a 364-residue protein sequence, read N- to C-terminus: Histidinol-phosphate aminotransferase (364 aa).

Position 226 is an N6-(pyridoxal phosphate)lysine (Lys-226).

The protein belongs to the class-II pyridoxal-phosphate-dependent aminotransferase family. Histidinol-phosphate aminotransferase subfamily. Homodimer. It depends on pyridoxal 5'-phosphate as a cofactor.

The enzyme catalyses L-histidinol phosphate + 2-oxoglutarate = 3-(imidazol-4-yl)-2-oxopropyl phosphate + L-glutamate. Its pathway is amino-acid biosynthesis; L-histidine biosynthesis; L-histidine from 5-phospho-alpha-D-ribose 1-diphosphate: step 7/9. The polypeptide is Histidinol-phosphate aminotransferase (Campylobacter jejuni subsp. jejuni serotype O:23/36 (strain 81-176)).